The primary structure comprises 151 residues: Natriuretic peptides A (151 aa).

A signal peptide spans 1–25 (MSSFSTTTVSFLLLLAFQLLGQTRA). The disordered stretch occupies residues 62–105 (VLSEPNEEAGAALSPLPEVPPWTGEVSPAQRDGGALGRGPWDSS). A propeptide spanning residues 93–103 (DGGALGRGPWD) is cleaved from the precursor. S129 is modified (phosphoserine). Cysteines 130 and 146 form a disulfide. Residues 147–151 (NSFRY) form an important for degradation of atrial natriuretic peptide by IDE region.

The protein belongs to the natriuretic peptide family. In terms of assembly, homodimer; disulfide-linked antiparallel dimer. In terms of processing, the precursor molecule is proteolytically cleaved by CORIN at Arg-123 to produce atrial natriuretic peptide. Undergoes further proteolytic cleavage by unknown proteases to give rise to long-acting natriuretic peptide, vessel dilator and kaliuretic peptide. Additional processing gives rise to the auriculin and atriopeptin peptides. In the kidneys, alternative processing by an unknown protease results in the peptide urodilatin. Post-translationally, cleavage by MME initiates degradation of the factor and thereby regulates its activity. Degraded by IDE (in vitro). During IDE degradation, the resulting products can temporarily stimulate NPR2 to produce cGMP, before the fragments are completely degraded and inactivated by IDE (in vitro). Degraded by IDE. In terms of processing, phosphorylation on Ser-129 decreases vasorelaxant activity. In terms of tissue distribution, detected in the kidney distal tubular cells (at protein level). Present in urine (at protein level). As to expression, detected in atrial and ventricular plasma samples, and in adipocytes (at protein level). Detected in urine in one study. However, was not detected in urine in another study. In the brain, predominantly expressed in the gray matter with very weak expression in the white matter (at protein level). Localizes to astrocyte-like structures throughout the white matter, and in the cerebral vessels detected in the leptomeningeal and parenchymal vessels, and endothelium and smooth muscle layers (at protein level). Relatively low levels of expression in the kidneys compared to urodilatin (at protein level).

It is found in the secreted. Its subcellular location is the perikaryon. The protein resides in the cell projection. In terms of biological role, hormone that plays a key role in mediating cardio-renal homeostasis, and is involved in vascular remodeling and regulating energy metabolism. Acts by specifically binding and stimulating NPR1 to produce cGMP, which in turn activates effector proteins, such as PRKG1, that drive various biological responses. Regulates vasodilation, natriuresis, diuresis and aldosterone synthesis and is therefore essential for regulating blood pressure, controlling the extracellular fluid volume and maintaining the fluid-electrolyte balance. Also involved in inhibiting cardiac remodeling and cardiac hypertrophy by inducing cardiomyocyte apoptosis and attenuating the growth of cardiomyocytes and fibroblasts. Plays a role in female pregnancy by promoting trophoblast invasion and spiral artery remodeling in uterus, and thus prevents pregnancy-induced hypertension. In adipose tissue, acts in various cGMP- and PKG-dependent pathways to regulate lipid metabolism and energy homeostasis. This includes up-regulating lipid metabolism and mitochondrial oxygen utilization by activating the AMP-activated protein kinase (AMPK), and increasing energy expenditure by acting via MAPK11 to promote the UCP1-dependent thermogenesis of brown adipose tissue. Binds the clearance receptor NPR3 which removes the hormone from circulation. Its function is as follows. May have a role in cardio-renal homeostasis through regulation of natriuresis, diuresis, vasodilation, and inhibiting aldosterone synthesis. In vitro, promotes the production of cGMP and induces vasodilation. May promote natriuresis, at least in part, by enhancing prostaglandin E2 synthesis resulting in the inhibition of renal Na+-K+-ATPase. However reports on the involvement of this peptide in mammal blood volume and blood pressure homeostasis are conflicting; according to a report, in vivo it is not sufficient to activate cGMP and does not inhibit collecting duct transport nor effect diuresis and natriuresis. Appears to bind to specific receptors that are distinct from the receptors bound by atrial natriuretic peptide and vessel dilator. Possibly enhances protein excretion in urine by decreasing proximal tubular protein reabsorption. May have a role in cardio-renal homeostasis through regulation of natriuresis, diuresis, and vasodilation. In vitro, promotes the production of cGMP and induces vasodilation. May promote natriuresis, at least in part, by enhancing prostaglandin E2 synthesis resulting in the inhibition of renal Na+-K+-ATPase. However reports on the involvement of this peptide in mammal blood volume and blood pressure homeostasis are conflicting; according to a report it is not sufficient to activate cGMP and does not inhibit collecting duct transport nor effect diuresis and natriuresis. Appears to bind to specific receptors that are distinct from the receptors bound by the atrial natriuretic and long-acting natriuretic peptides. Possibly functions in protein excretion in urine by maintaining the integrity of the proximal tubules and enhancing protein excretion by decreasing proximal tubular protein reabsorption. Functionally, may have a role in cardio-renal homeostasis through regulation of diuresis and inhibiting aldosterone synthesis. In vitro, promotes the production of cGMP and induces vasodilation. May promote natriuresis, at least in part, by enhancing prostaglandin E2 synthesis resulting in the inhibition of renal Na+-K+-ATPase. May have a role in potassium excretion but not sodium excretion (natriuresis). Possibly enhances protein excretion in urine by decreasing proximal tubular protein reabsorption. In terms of biological role, hormone produced in the kidneys that appears to be important for maintaining cardio-renal homeostasis. Mediates vasodilation, natriuresis and diuresis primarily in the renal system, in order to maintain the extracellular fluid volume and control the fluid-electrolyte balance. Specifically binds and stimulates cGMP production by renal transmembrane receptors, likely NPR1. Urodilatin not ANP, may be the natriuretic peptide responsible for the regulation of sodium and water homeostasis in the kidney. Its function is as follows. May have a role in cardio-renal homeostasis through regulation of natriuresis and vasodilation. In vivo promotes natriuresis and in vitro, vasodilates renal artery strips. May have a role in cardio-renal homeostasis through regulation of regulation of natriuresis and vasodilation. In vivo promotes natriuresis. In vitro, vasodilates intestinal smooth muscle but not smooth muscle strips. Functionally, may have a role in cardio-renal homeostasis through regulation of natriuresis and vasodilation. In vivo promotes natriuresis. In vitro, selectively vasodilates intestinal and vascular smooth muscle strips. In terms of biological role, may have a role in cardio-renal homeostasis through regulation of natriuresis and vasodilation. In vivo promotes natriuresis. In vitro, selectively vasodilates intestinal smooth muscle but not vascular smooth muscle strips. This Homo sapiens (Human) protein is Natriuretic peptides A (NPPA).